The following is a 207-amino-acid chain: Thiamine-phosphate synthase (207 aa).

4-amino-2-methyl-5-(diphosphooxymethyl)pyrimidine-binding positions include 36-40 and asparagine 68; that span reads QLRMK. Mg(2+) is bound by residues aspartate 69 and aspartate 88. Residue serine 106 participates in 4-amino-2-methyl-5-(diphosphooxymethyl)pyrimidine binding. 132–134 provides a ligand contact to 2-[(2R,5Z)-2-carboxy-4-methylthiazol-5(2H)-ylidene]ethyl phosphate; it reads TNT. Lysine 135 contacts 4-amino-2-methyl-5-(diphosphooxymethyl)pyrimidine. 2-[(2R,5Z)-2-carboxy-4-methylthiazol-5(2H)-ylidene]ethyl phosphate-binding positions include glycine 162 and 182–183; that span reads VS.

It belongs to the thiamine-phosphate synthase family. It depends on Mg(2+) as a cofactor.

The enzyme catalyses 2-[(2R,5Z)-2-carboxy-4-methylthiazol-5(2H)-ylidene]ethyl phosphate + 4-amino-2-methyl-5-(diphosphooxymethyl)pyrimidine + 2 H(+) = thiamine phosphate + CO2 + diphosphate. It carries out the reaction 2-(2-carboxy-4-methylthiazol-5-yl)ethyl phosphate + 4-amino-2-methyl-5-(diphosphooxymethyl)pyrimidine + 2 H(+) = thiamine phosphate + CO2 + diphosphate. The catalysed reaction is 4-methyl-5-(2-phosphooxyethyl)-thiazole + 4-amino-2-methyl-5-(diphosphooxymethyl)pyrimidine + H(+) = thiamine phosphate + diphosphate. It participates in cofactor biosynthesis; thiamine diphosphate biosynthesis; thiamine phosphate from 4-amino-2-methyl-5-diphosphomethylpyrimidine and 4-methyl-5-(2-phosphoethyl)-thiazole: step 1/1. Condenses 4-methyl-5-(beta-hydroxyethyl)thiazole monophosphate (THZ-P) and 2-methyl-4-amino-5-hydroxymethyl pyrimidine pyrophosphate (HMP-PP) to form thiamine monophosphate (TMP). The polypeptide is Thiamine-phosphate synthase (Methanococcus maripaludis (strain C6 / ATCC BAA-1332)).